The chain runs to 423 residues: Cyclin-dependent kinase 14 (423 aa).

A phosphoserine mark is found at S32, S49, and S88. Residues 49–64 (SENNACINFKTSSTGK) show a composition bias toward polar residues. The tract at residues 49 to 87 (SENNACINFKTSSTGKESPKVRRHSSPSSPTSPKFGKAD) is disordered. The Protein kinase domain occupies 89 to 373 (YEKLEKLGEG…AQAALSHEYF (285 aa)). Residues 95–103 (LGEGSYATV) and K118 contribute to the ATP site. The active-site Proton acceptor is D210. A disordered region spans residues 403 to 423 (ESMRAFGKNNSYGKSLSNSKH). Residues 410–423 (KNNSYGKSLSNSKH) are compositionally biased toward polar residues.

This sequence belongs to the protein kinase superfamily. CMGC Ser/Thr protein kinase family. CDC2/CDKX subfamily. Found in a complex with LRP6, CCNY and CAPRIN2 during G2/M stage; CAPRIN2 functions as a scaffold for the complex by binding to CCNY via its N terminus and to CDK14 via its C terminus. Interacts with CCNY; CCNY mediates its recruitment to the plasma membrane and promotes phosphorylation of LRP6. Interacts with CCDN3 and CDKN1A. Interacts with SEPT8. Interacts with 14-3-3 proteina YWHAB, YWHAE, YWHAH and YWHAQ.

It localises to the cell membrane. Its subcellular location is the cytoplasm. The protein resides in the nucleus. It carries out the reaction L-seryl-[protein] + ATP = O-phospho-L-seryl-[protein] + ADP + H(+). The enzyme catalyses L-threonyl-[protein] + ATP = O-phospho-L-threonyl-[protein] + ADP + H(+). Serine/threonine-protein kinase activity is promoted by associated cyclins CCDN3 and CCNY and repressed by CDKN1A. In terms of biological role, serine/threonine-protein kinase involved in the control of the eukaryotic cell cycle, whose activity is controlled by an associated cyclin. Acts as a cell-cycle regulator of Wnt signaling pathway during G2/M phase by mediating the phosphorylation of LRP6 at 'Ser-1490', leading to the activation of the Wnt signaling pathway. Acts as a regulator of cell cycle progression and cell proliferation via its interaction with CCDN3. Phosphorylates RB1 in vitro, however the relevance of such result remains to be confirmed in vivo. May also play a role in meiosis, neuron differentiation and may indirectly act as a negative regulator of insulin-responsive glucose transport. The chain is Cyclin-dependent kinase 14 (CDK14) from Callithrix jacchus (White-tufted-ear marmoset).